The sequence spans 478 residues: Sporozoite surface protein P36p (478 aa).

Residues 1–41 (MYVLVLIHMCYHFTMKRKKLFVYFIFLSFIINFNFNININF) form the signal peptide. 6-Cys domains follow at residues 42–178 (VCSN…IKKT) and 181–326 (KIKG…FDNN). Intrachain disulfides connect cysteine 59-cysteine 71, cysteine 85-cysteine 159, cysteine 102-cysteine 157, cysteine 185-cysteine 209, cysteine 223-cysteine 302, and cysteine 243-cysteine 300. 2 N-linked (GlcNAc...) asparagine glycosylation sites follow: asparagine 109 and asparagine 138. N-linked (GlcNAc...) asparagine glycans are attached at residues asparagine 229, asparagine 279, and asparagine 291. A lipid anchor (GPI-anchor amidated serine) is attached at serine 455. Positions 456–478 (SSKYILFNNFLILFIFLIYIYST) are cleaved as a propeptide — removed in mature form.

The protein localises to the cell surface. Its subcellular location is the cell membrane. Its function is as follows. Involved in sporozoite infection of hepatocytes and replication therein. This is Sporozoite surface protein P36p (PF52) from Plasmodium falciparum (isolate 3D7).